The sequence spans 79 residues: Small ribosomal subunit protein uS17 (79 aa).

This sequence belongs to the universal ribosomal protein uS17 family. In terms of assembly, part of the 30S ribosomal subunit.

Its function is as follows. One of the primary rRNA binding proteins, it binds specifically to the 5'-end of 16S ribosomal RNA. This chain is Small ribosomal subunit protein uS17, found in Rhodospirillum rubrum (strain ATCC 11170 / ATH 1.1.1 / DSM 467 / LMG 4362 / NCIMB 8255 / S1).